Here is a 147-residue protein sequence, read N- to C-terminus: Hemoglobin subunit delta (147 aa).

Val2 bears the N-acetylalanine; in variant Niigata mark. Residues 3–147 form the Globin domain; that stretch reads HLTPEEKTAV…VANALAHKYH (145 aa). Ser51 carries the phosphoserine modification. Heme b-binding residues include His64 and His93.

Belongs to the globin family. Heterotetramer of two alpha chains and two delta chains in adult hemoglobin A2 (HbA2). HbA2 represents less than 3.5% of adult hemoglobin. Red blood cells.

Functionally, involved in oxygen transport from the lung to the various peripheral tissues. In Homo sapiens (Human), this protein is Hemoglobin subunit delta (HBD).